Reading from the N-terminus, the 368-residue chain is GTPase Obg (368 aa).

Residues 1–159 (MQFIDQAEIE…RQLRLELKLL (159 aa)) enclose the Obg domain. The region spanning 160 to 328 (AEVGIIGLPN…LMQLVWQWLD (169 aa)) is the OBG-type G domain. Residues 166–173 (GLPNAGKS), 191–195 (FTTLV), 213–216 (DIPG), 280–283 (NKID), and 309–311 (SAA) each bind GTP. Ser173 and Thr193 together coordinate Mg(2+).

It belongs to the TRAFAC class OBG-HflX-like GTPase superfamily. OBG GTPase family. Monomer. It depends on Mg(2+) as a cofactor.

It localises to the cytoplasm. Functionally, an essential GTPase which binds GTP, GDP and possibly (p)ppGpp with moderate affinity, with high nucleotide exchange rates and a fairly low GTP hydrolysis rate. Plays a role in control of the cell cycle, stress response, ribosome biogenesis and in those bacteria that undergo differentiation, in morphogenesis control. The chain is GTPase Obg from Synechocystis sp. (strain ATCC 27184 / PCC 6803 / Kazusa).